Consider the following 350-residue polypeptide: UBX domain-containing protein 2B (350 aa).

Residues 1-29 are compositionally biased toward acidic residues; that stretch reads MEERENSEEGDDGAGEEEEEDQGSGEDGG. Residues 1 to 46 are disordered; that stretch reads MEERENSEEGDDGAGEEEEEDQGSGEDGGEVGAEREQEAELKDSLR. The segment covering 32-45 has biased composition (basic and acidic residues); it reads GAEREQEAELKDSL. Positions 160–225 constitute an SEP domain; the sequence is EIQILLKLWS…MEDHQDQEYI (66 aa). The UBX domain maps to 271–348; it reads EHVPTTKIQI…DILNTVILQR (78 aa).

The protein belongs to the NSFL1C family.

It is found in the nucleus. The protein localises to the cytoplasm. Its subcellular location is the cytosol. The protein resides in the endoplasmic reticulum. It localises to the golgi apparatus. It is found in the cytoskeleton. The protein localises to the microtubule organizing center. Its subcellular location is the centrosome. In terms of biological role, adapter protein required for Golgi and endoplasmic reticulum biogenesis. Involved in Golgi and endoplasmic reticulum maintenance during interphase and in their reassembly at the end of mitosis. Regulates the centrosomal levels of kinase aurka-a/Aurora A during mitotic progression by promoting aurka-a removal from centrosomes in prophase. Also, regulates spindle orientation during mitosis. The sequence is that of UBX domain-containing protein 2B (ubxn2b) from Xenopus laevis (African clawed frog).